Here is a 73-residue protein sequence, read N- to C-terminus: uncharacterized protein (73 aa).

The signal sequence occupies residues 1-22 (MKILGVTGFILICLLAISVLMD). A helical transmembrane segment spans residues 44-66 (TFAEWVVLLFFVLVLVREMYVIY).

It localises to the membrane. This is an uncharacterized protein from Bacillus subtilis (strain 168).